The chain runs to 144 residues: uncharacterized protein (144 aa).

This is an uncharacterized protein from Bacillus subtilis (strain 168).